The primary structure comprises 294 residues: FAD-dependent monooxygenase SAT1 (294 aa).

Position 108 (aspartate 108) interacts with FAD.

Belongs to the paxM FAD-dependent monooxygenase family. Requires FAD as cofactor.

The protein operates within mycotoxin biosynthesis. In terms of biological role, FAD-dependent monooxygenase; part of the satratoxin SC1 cluster involved in the biosynthesis of satratoxins, trichothecene mycotoxins that are associated with human food poisonings. Satratoxins are suggested to be made by products of multiple gene clusters (SC1, SC2 and SC3) that encode 21 proteins in all, including polyketide synthases, acetyltransferases, and other enzymes expected to modify the trichothecene skeleton. SC1 encodes 10 proteins, SAT1 to SAT10. The largest are SAT8, which encodes a putative polyketide synthase (PKS) with a conventional non-reducing architecture, and SAT10, a putative protein containing four ankyrin repeats and thus may be involved in protein scaffolding. The putative short-chain reductase SAT3 may assist the PKS in some capacity. SAT6 contains a secretory lipase domain and acts probably as a trichothecene esterase. SAT5 encodes a putative acetyltransferase, and so, with SAT6, may affect endogenous protection from toxicity. The probable transcription factor SAT9 may regulate the expression of the SC1 cluster. SC2 encodes proteins SAT11 to SAT16, the largest of which encodes the putative reducing PKS SAT13. SAT11 is a cytochrome P450 monooxygenase, while SAT14 and SAT16 are probable acetyltransferases. The SC2 cluster may be regulated by the transcription factor SAT15. SC3 is a small cluster that encodes 5 proteins, SAT17 to SAT21. SAT21 is a putative MFS-type transporter which may have a role in exporting secondary metabolites. The four other proteins putatively encoded in SC3 include the taurine hydroxylase-like protein SAT17, the O-methyltransferase SAT18, the acetyltransferase SAT19, and the Cys6-type zinc finger SAT20, the latter being probably involved in regulation of SC3 expression. This Stachybotrys chartarum (strain CBS 109288 / IBT 7711) (Toxic black mold) protein is FAD-dependent monooxygenase SAT1.